Reading from the N-terminus, the 322-residue chain is uncharacterized protein (322 aa).

The tract at residues 277 to 322 (LVTYGGKDGPSDNEDGPSDDEDGPSDDEEGLSKDGVSEYYQSDLDD) is disordered. The span at 287–305 (SDNEDGPSDDEDGPSDDEE) shows a compositional bias: acidic residues.

This is an uncharacterized protein from Frog virus 3 (isolate Goorha) (FV-3).